The primary structure comprises 196 residues: Probable molybdenum cofactor guanylyltransferase (196 aa).

Residues leucine 7–glycine 9, lysine 19, aspartate 68, and aspartate 93 each bind GTP. Aspartate 93 contributes to the Mg(2+) binding site.

The protein belongs to the MobA family. The cofactor is Mg(2+).

The protein localises to the cytoplasm. The enzyme catalyses Mo-molybdopterin + GTP + H(+) = Mo-molybdopterin guanine dinucleotide + diphosphate. Functionally, transfers a GMP moiety from GTP to Mo-molybdopterin (Mo-MPT) cofactor (Moco or molybdenum cofactor) to form Mo-molybdopterin guanine dinucleotide (Mo-MGD) cofactor. This is Probable molybdenum cofactor guanylyltransferase from Pyrococcus furiosus (strain ATCC 43587 / DSM 3638 / JCM 8422 / Vc1).